The chain runs to 404 residues: Multidrug resistance protein MdtG (404 aa).

11 helical membrane-spanning segments follow: residues 19 to 39 (LGCF…PLYV), 56 to 76 (LVFS…GGLA), 90 to 110 (LGMA…QFLI), 113 to 133 (ALLG…ATQV), 144 to 164 (TLST…GLLA), 171 to 191 (PVFF…FFFI), 222 to 242 (LFVT…ILTL), 254 to 274 (IAFI…LSAP), 288 to 308 (ILIV…FVQT), 317 to 337 (FLLG…LVYN), and 376 to 396 (AVFC…WNSL).

Belongs to the major facilitator superfamily. DHA1 family. MdtG (TC 2.A.1.2.20) subfamily.

The protein localises to the cell inner membrane. This chain is Multidrug resistance protein MdtG, found in Salmonella agona (strain SL483).